A 213-amino-acid polypeptide reads, in one-letter code: GTP cyclohydrolase 1 (213 aa).

3 residues coordinate Zn(2+): Cys104, His107, and Cys175.

The protein belongs to the GTP cyclohydrolase I family. In terms of assembly, homomer.

It carries out the reaction GTP + H2O = 7,8-dihydroneopterin 3'-triphosphate + formate + H(+). It participates in cofactor biosynthesis; 7,8-dihydroneopterin triphosphate biosynthesis; 7,8-dihydroneopterin triphosphate from GTP: step 1/1. The sequence is that of GTP cyclohydrolase 1 from Brucella suis (strain ATCC 23445 / NCTC 10510).